Reading from the N-terminus, the 377-residue chain is Presenilin-associated rhomboid-like protein, mitochondrial (377 aa).

A mitochondrion-targeting transit peptide spans 1–50 (MALQGWVQRGWRCGPAWAPPLGGGYRELSATQAPRLLGRRFNLFVQQKCG). Residues 51-99 (FRKAPRKVEPRRSDTGSSGEAYKRSALIPPLEETVFYPSPYPIRTLVKP) are Mitochondrial matrix-facing. Residues serine 63 and serine 68 each carry the phosphoserine modification. A helical transmembrane segment spans residues 100–119 (FFFTIGFTGCAFGSAAIWQY). Topologically, residues 120 to 165 (ESLKSRVQSYFDGIKADWLDSIRPQKEGNLRKEINKWWNSLSDGQR) are mitochondrial intermembrane. Residues 166-185 (TVTGIIAANALVFCLWRVPS) traverse the membrane as a helical segment. The Mitochondrial matrix segment spans residues 186 to 205 (LQRTMIRYFTSNPASKVLCS). A helical transmembrane segment spans residues 206–228 (PMLLSTFSHFSLFHMAANMYVLW). Over 229 to 242 (SFSSSIVNILGQEQ) the chain is Mitochondrial intermembrane. A helical transmembrane segment spans residues 243–260 (FVAVYLSAGVISNFVSYV). Topologically, residues 261–270 (CKVATGRYGP) are mitochondrial matrix. The chain crosses the membrane as a helical span at residues 271 to 287 (SLGASGAIMTVLAAVCT). Serine 275 serves as the catalytic Nucleophile. Topologically, residues 288–293 (KIPEGR) are mitochondrial intermembrane. The chain crosses the membrane as a helical span at residues 294 to 316 (LAIIFLPVFTFTAGNALKAIIAM). The Mitochondrial matrix portion of the chain corresponds to 317–330 (DTAGMILGWKFFDH). The chain crosses the membrane as a helical span at residues 331 to 352 (AAHLGGALFGIWYITYGHELIW). Histidine 333 is a catalytic residue. The Mitochondrial intermembrane portion of the chain corresponds to 353 to 377 (KNREPLVKIWHEIRTNGPKKGGGSK).

This sequence belongs to the peptidase S54 family. Interacts with PSEN1 and PSEN2. Binds OPA1. Post-translationally, P-beta is proteolytically processed (beta-cleavage) in a PARL-dependent manner.

Its subcellular location is the mitochondrion inner membrane. It is found in the nucleus. The enzyme catalyses Cleaves type-1 transmembrane domains using a catalytic dyad composed of serine and histidine that are contributed by different transmembrane domains.. Its function is as follows. Required for the control of apoptosis during postnatal growth. Essential for proteolytic processing of an antiapoptotic form of OPA1 which prevents the release of mitochondrial cytochrome c in response to intrinsic apoptotic signals. Required for the maturation of PINK1 into its 52kDa mature form after its cleavage by mitochondrial-processing peptidase (MPP). Promotes cleavage of serine/threonine-protein phosphatase PGAM5 in damaged mitochondria in response to loss of mitochondrial membrane potential. Mediates differential cleavage of PINK1 and PGAM5 depending on the health status of mitochondria, disassociating from PINK1 and associating with PGAM5 in response to mitochondrial membrane potential loss. Required for processing of CLPB into a form with higher protein disaggregase activity by removing an autoinhibitory N-terminal peptide. Promotes processing of DIABLO/SMAC in the mitochondrion which is required for DIABLO apoptotic activity. Also required for cleavage of STARD7 and TTC19. Promotes changes in mitochondria morphology regulated by phosphorylation of P-beta domain. The protein is Presenilin-associated rhomboid-like protein, mitochondrial (Parl) of Mus musculus (Mouse).